A 92-amino-acid chain; its full sequence is Small ribosomal subunit protein uS19c (92 aa).

It belongs to the universal ribosomal protein uS19 family.

Its subcellular location is the plastid. It is found in the chloroplast. Its function is as follows. Protein S19 forms a complex with S13 that binds strongly to the 16S ribosomal RNA. This Chloranthus spicatus (Chulantree) protein is Small ribosomal subunit protein uS19c.